A 544-amino-acid polypeptide reads, in one-letter code: Protein kinase dsk1 (544 aa).

The Protein kinase domain maps to 81-516; the sequence is YVVERKLGWG…AGYMSNSPWL (436 aa). Residues 87–95 and K110 contribute to the ATP site; that span reads LGWGHFSTV. The active-site Proton acceptor is the D214. Disordered regions lie at residues 235–299 and 316–341; these read PATT…SSPF and ISLR…SLIL. The span at 237–254 shows a compositional bias: low complexity; it reads TTSSPTSNTSSSKTRNNT. Composition is skewed to polar residues over residues 281-299 and 327-337; these read KNPT…SSPF and HPNSPFSSGDN.

This sequence belongs to the protein kinase superfamily. Ser/Thr protein kinase family. Post-translationally, phosphorylated on Ser residue(s).

The protein localises to the cytoplasm. It is found in the nucleus. The catalysed reaction is L-seryl-[protein] + ATP = O-phospho-L-seryl-[protein] + ADP + H(+). It catalyses the reaction L-threonyl-[protein] + ATP = O-phospho-L-threonyl-[protein] + ADP + H(+). Its function is as follows. May play an important role in mitotic control by altering cellular location, degree of phosphorylation and kinase activity. Abundant expression accelerates the exit when cells are in M-phase and also delays the entry into mitosis when cells are in G2. Phosphorylates prp2 in vitro and so may have a role in co-ordinating pre-mRNA splicing with the progression of the cell division cycle. This chain is Protein kinase dsk1 (dsk1), found in Schizosaccharomyces pombe (strain 972 / ATCC 24843) (Fission yeast).